We begin with the raw amino-acid sequence, 277 residues long: Large ribosomal subunit protein uL2 (277 aa).

The disordered stretch occupies residues R219 to K277. A compositionally biased stretch (basic and acidic residues) spans D231–K241. Residues K256–K277 show a composition bias toward basic residues.

The protein belongs to the universal ribosomal protein uL2 family. In terms of assembly, part of the 50S ribosomal subunit. Forms a bridge to the 30S subunit in the 70S ribosome.

In terms of biological role, one of the primary rRNA binding proteins. Required for association of the 30S and 50S subunits to form the 70S ribosome, for tRNA binding and peptide bond formation. It has been suggested to have peptidyltransferase activity; this is somewhat controversial. Makes several contacts with the 16S rRNA in the 70S ribosome. The sequence is that of Large ribosomal subunit protein uL2 from Campylobacter concisus (strain 13826).